The primary structure comprises 138 residues: Small ribosomal subunit protein uS11c (138 aa).

Residues 1-22 are disordered; the sequence is MAKSIPKTGSRKNVRIGSRNQT.

This sequence belongs to the universal ribosomal protein uS11 family. Part of the 30S ribosomal subunit.

The protein resides in the plastid. It localises to the chloroplast. This is Small ribosomal subunit protein uS11c from Phaseolus angularis (Azuki bean).